The chain runs to 512 residues: Cytochrome P450 monooxygenase hkm5 (512 aa).

A helical transmembrane segment spans residues 18–38 (LIQLVRALLWVLVITIGGAIV). N-linked (GlcNAc...) asparagine glycans are attached at residues N184, N263, N275, N374, and N419. C456 serves as a coordination point for heme.

It belongs to the cytochrome P450 family. Heme is required as a cofactor.

The protein localises to the membrane. The catalysed reaction is hancockiamide A + reduced [NADPH--hemoprotein reductase] + O2 = hancockiamide G + oxidized [NADPH--hemoprotein reductase] + 2 H2O + H(+). It carries out the reaction hancockiamide B + reduced [NADPH--hemoprotein reductase] + O2 = hancockiamide C + oxidized [NADPH--hemoprotein reductase] + 2 H2O + H(+). It catalyses the reaction hancockiamide D + reduced [NADPH--hemoprotein reductase] + O2 = hancockiamide H + oxidized [NADPH--hemoprotein reductase] + 2 H2O + H(+). It participates in secondary metabolite biosynthesis. In terms of biological role, cytochrome P450 monooxygenase; part of the gene cluster that mediates the biosynthesis of hancockiamides, an unusual new family of N-cinnamoylated piperazines. The NRPS hkm10 and the NmrA-like reductase hkm9 are proposed to convert two molecules of L-Phe to the intermediary piperazine called xenocockiamide A. Xenocockiamide A is then converted to hancockiamide D via a series of hydroxylations and O-methylations. The tyrosinase hkm6 may catalyze an aromatic hydroxylation, then the 2-oxoglutarate-dependent Fe(II) dioxygenase hkm4 and the FAD-dependent phenol hydroxylase hkm7 may catalyze consecutive hydroxylations to install 2 more hydroxy groups, and the methyltransferase hkm8 probably catalyzes two methylations using 2 molecules of S-adenosyl-L-methionine (SAM). The NRPS hkm11 activates and transfers trans-cinnamate supplied by the PAL hkm12 to hancockiamide D and produces hancockiamide A. NRPS Hkm11 has the flexibility to tolerate the bulky hancockiamide G as a substrate and the absence of the acetyl-transferase hkm3 opens up the opportunity for hkm11 to introduce a second N-cinnamoyl moiety. The cytochrome P450 monooxygenase hkm5 catalyzes the methylenedioxy bridge formation, converting hancockiamide A into hancockiamide G. Hkm5 can also convert hancockiamide B into hancockiamide C, and hancockiamide D into hancockiamide H. The N-acetyltransferase hkm3 finally transfers an acetyl group to 1-N of piperazine, converting hancockiamide A into hancockiamide B and hancockiamide G into hancockiamide C. The polypeptide is Cytochrome P450 monooxygenase hkm5 (Aspergillus hancockii).